A 273-amino-acid chain; its full sequence is Glutamate racemase (273 aa).

Substrate is bound by residues 19–20 (DS) and 51–52 (YG). Cysteine 83 acts as the Proton donor/acceptor in catalysis. 84 to 85 (NT) lines the substrate pocket. The active-site Proton donor/acceptor is cysteine 198. 199-200 (TH) is a binding site for substrate.

The protein belongs to the aspartate/glutamate racemases family.

It carries out the reaction L-glutamate = D-glutamate. It participates in cell wall biogenesis; peptidoglycan biosynthesis. Functionally, provides the (R)-glutamate required for cell wall biosynthesis. This Agrobacterium fabrum (strain C58 / ATCC 33970) (Agrobacterium tumefaciens (strain C58)) protein is Glutamate racemase.